The primary structure comprises 151 residues: Ribosome maturation factor RimP (151 aa).

The protein belongs to the RimP family.

It localises to the cytoplasm. Functionally, required for maturation of 30S ribosomal subunits. This Nitrosococcus oceani (strain ATCC 19707 / BCRC 17464 / JCM 30415 / NCIMB 11848 / C-107) protein is Ribosome maturation factor RimP.